Reading from the N-terminus, the 446-residue chain is Phosphoglucosamine mutase (446 aa).

Residue Ser-100 is the Phosphoserine intermediate of the active site. 4 residues coordinate Mg(2+): Ser-100, Asp-241, Asp-243, and Asp-245. Ser-100 carries the post-translational modification Phosphoserine.

This sequence belongs to the phosphohexose mutase family. Requires Mg(2+) as cofactor. Post-translationally, activated by phosphorylation.

The catalysed reaction is alpha-D-glucosamine 1-phosphate = D-glucosamine 6-phosphate. Catalyzes the conversion of glucosamine-6-phosphate to glucosamine-1-phosphate. In Methylorubrum extorquens (strain CM4 / NCIMB 13688) (Methylobacterium extorquens), this protein is Phosphoglucosamine mutase.